The following is a 108-amino-acid chain: Complement inhibitor CirpT4 (108 aa).

The first 19 residues, 1-19, serve as a signal peptide directing secretion; the sequence is MRAFVALFCTLVAFATVIC. Intrachain disulfides connect C40-C64, C59-C98, C76-C99, and C85-C104.

The protein belongs to the CirpT family. As to expression, expressed in salivary glands.

The protein resides in the secreted. Its function is as follows. Complement inhibitor. Prevents complement-mediated activation of C5 by sterically preventing direct binding of C5 to its convertase (binding with domains MG4 and MG5). Binds C5 at a different binding site than the other tick complement inhibitors OmCI and RaCI3, and the drug eculizumab. Inhibits the complement in human, rat and guinea pig, and also shows a reduced inhibition in rabbit and pig. The chain is Complement inhibitor CirpT4 from Amblyomma americanum (Lone star tick).